A 637-amino-acid chain; its full sequence is Limonene synthase, chloroplastic (637 aa).

A chloroplast-targeting transit peptide spans 1 to 56 (MALLSIVSLQVPKSCGLKSLISSSNVQKALCISTAVPTLRMRRRQKALVINMKLTT). Mg(2+)-binding residues include Asp-388, Asp-392, and Asp-540. The DDXXD motif signature appears at 388-392 (DDIYD).

The protein belongs to the terpene synthase family. Tpsd subfamily. It depends on Mg(2+) as a cofactor. The cofactor is Mn(2+). K(+) is required as a cofactor.

The protein localises to the plastid. It is found in the chloroplast. It carries out the reaction (2E)-geranyl diphosphate = (4S)-limonene + diphosphate. It functions in the pathway terpene metabolism; oleoresin biosynthesis. Functionally, involved in defensive oleoresin formation in conifers in response to insect attack or other injury. Involved in monoterpene (C10) olefins biosynthesis. The sequence is that of Limonene synthase, chloroplastic (ag10) from Abies grandis (Grand fir).